A 69-amino-acid chain; its full sequence is Neurotoxin Cex5 (69 aa).

A signal peptide is located at residue Ala-1. Positions 2-67 constitute an LCN-type CS-alpha/beta domain; the sequence is KDGYLVSKST…TYPIPGKSCG (66 aa). 4 disulfide bridges follow: Cys-13–Cys-66, Cys-17–Cys-42, Cys-26–Cys-47, and Cys-30–Cys-49. At Cys-66 the chain carries Cysteine amide. The propeptide occupies 67–69; that stretch reads GKK.

This sequence belongs to the long (4 C-C) scorpion toxin superfamily. Sodium channel inhibitor family. Beta subfamily. Expressed by the venom gland.

The protein resides in the secreted. In terms of biological role, beta toxins bind voltage-independently at site-4 of sodium channels (Nav) and shift the voltage of activation toward more negative potentials thereby affecting sodium channel activation and promoting spontaneous and repetitive firing. This is Neurotoxin Cex5 from Centruroides exilicauda (Bark scorpion).